We begin with the raw amino-acid sequence, 458 residues long: Glutamyl-tRNA reductase (458 aa).

Substrate-binding positions include 49–52 (TCNR), S111, 116–118 (ETE), and Q122. The Nucleophile role is filled by C50. 191–196 (GAGKMS) serves as a coordination point for NADP(+). Basic and acidic residues-rich tracts occupy residues 426–440 (IPKDGEEHSSSKEVE) and 448–458 (ERGHHESDFHN). A disordered region spans residues 426–458 (IPKDGEEHSSSKEVESVTQSSTERGHHESDFHN).

Belongs to the glutamyl-tRNA reductase family. As to quaternary structure, homodimer.

The catalysed reaction is (S)-4-amino-5-oxopentanoate + tRNA(Glu) + NADP(+) = L-glutamyl-tRNA(Glu) + NADPH + H(+). Its pathway is porphyrin-containing compound metabolism; protoporphyrin-IX biosynthesis; 5-aminolevulinate from L-glutamyl-tRNA(Glu): step 1/2. Catalyzes the NADPH-dependent reduction of glutamyl-tRNA(Glu) to glutamate 1-semialdehyde (GSA). This is Glutamyl-tRNA reductase from Natranaerobius thermophilus (strain ATCC BAA-1301 / DSM 18059 / JW/NM-WN-LF).